The following is a 466-amino-acid chain: Cysteine--tRNA ligase (466 aa).

Cys-29 is a Zn(2+) binding site. The short motif at 31 to 41 (PTVYNYIHIGN) is the 'HIGH' region element. 3 residues coordinate Zn(2+): Cys-209, His-234, and Glu-238. The 'KMSKS' region signature appears at 266–270 (KMSKS). Lys-269 lines the ATP pocket. A Phosphoserine modification is found at Ser-270.

This sequence belongs to the class-I aminoacyl-tRNA synthetase family. As to quaternary structure, monomer. Zn(2+) is required as a cofactor.

Its subcellular location is the cytoplasm. The catalysed reaction is tRNA(Cys) + L-cysteine + ATP = L-cysteinyl-tRNA(Cys) + AMP + diphosphate. This is Cysteine--tRNA ligase from Bacillus pumilus (strain SAFR-032).